The primary structure comprises 39 residues: Natriuretic peptide PaNP-d (39 aa).

The propeptide occupies 1-8 (SGSKTAEI). The segment at 1 to 39 (SGSKTAEIDDGCFGLPLDPIGSTSGMGCRSVPKPIPGGS) is disordered. The cysteines at positions 12 and 28 are disulfide-linked.

This sequence belongs to the natriuretic peptide family. In terms of tissue distribution, expressed by the venom gland.

The protein localises to the secreted. In terms of biological role, snake venom natriuretic peptide that targets both NPR1 and NPR2. Exhibits hypotensive and vasodepressor activities. In Pseudechis australis (Mulga snake), this protein is Natriuretic peptide PaNP-d.